The chain runs to 472 residues: RING-H2 finger protein ATL13 (472 aa).

The chain crosses the membrane as a helical span at residues 51-71 (ILLIIIILSIIFFISGLLHLL). The RING-type; atypical zinc finger occupies 134–176 (CAVCLCEFETEDKLRLLPKCSHAFHMDCIDTWLLSHSTCPLCR). The segment at 320-340 (VSTKKQSSKNRGLPGHRTAMS) is disordered.

Belongs to the RING-type zinc finger family. ATL subfamily.

The protein localises to the membrane. It carries out the reaction S-ubiquitinyl-[E2 ubiquitin-conjugating enzyme]-L-cysteine + [acceptor protein]-L-lysine = [E2 ubiquitin-conjugating enzyme]-L-cysteine + N(6)-ubiquitinyl-[acceptor protein]-L-lysine.. It functions in the pathway protein modification; protein ubiquitination. In Arabidopsis thaliana (Mouse-ear cress), this protein is RING-H2 finger protein ATL13 (ATL13).